A 122-amino-acid polypeptide reads, in one-letter code: Large ribosomal subunit protein uL14 (122 aa).

This sequence belongs to the universal ribosomal protein uL14 family. In terms of assembly, part of the 50S ribosomal subunit. Forms a cluster with proteins L3 and L19. In the 70S ribosome, L14 and L19 interact and together make contacts with the 16S rRNA in bridges B5 and B8.

Binds to 23S rRNA. Forms part of two intersubunit bridges in the 70S ribosome. The chain is Large ribosomal subunit protein uL14 from Leuconostoc mesenteroides subsp. mesenteroides (strain ATCC 8293 / DSM 20343 / BCRC 11652 / CCM 1803 / JCM 6124 / NCDO 523 / NBRC 100496 / NCIMB 8023 / NCTC 12954 / NRRL B-1118 / 37Y).